The following is a 342-amino-acid chain: ATP-dependent (S)-NAD(P)H-hydrate dehydratase (342 aa).

The YjeF C-terminal domain maps to 11 to 337; sequence ILPALEKVVP…EYLGHRLFTF (327 aa). (6S)-NADPHX-binding positions include Gly127 and 180 to 186; that span reads NVMEHKR. ATP is bound by residues 229–233 and 248–257; these read KGKTD and GSPRRCGGQG. Position 258 (Asp258) interacts with (6S)-NADPHX.

It belongs to the NnrD/CARKD family. Requires Mg(2+) as cofactor.

It carries out the reaction (6S)-NADHX + ATP = ADP + phosphate + NADH + H(+). The catalysed reaction is (6S)-NADPHX + ATP = ADP + phosphate + NADPH + H(+). Its function is as follows. Catalyzes the dehydration of the S-form of NAD(P)HX at the expense of ATP, which is converted to ADP. Together with NAD(P)HX epimerase, which catalyzes the epimerization of the S- and R-forms, the enzyme allows the repair of both epimers of NAD(P)HX, a damaged form of NAD(P)H that is a result of enzymatic or heat-dependent hydration. This chain is ATP-dependent (S)-NAD(P)H-hydrate dehydratase, found in Physcomitrium patens (Spreading-leaved earth moss).